A 184-amino-acid chain; its full sequence is Large ribosomal subunit protein uL6 (184 aa).

This sequence belongs to the universal ribosomal protein uL6 family. In terms of assembly, part of the 50S ribosomal subunit.

Functionally, this protein binds to the 23S rRNA, and is important in its secondary structure. It is located near the subunit interface in the base of the L7/L12 stalk, and near the tRNA binding site of the peptidyltransferase center. The sequence is that of Large ribosomal subunit protein uL6 from Thermosipho melanesiensis (strain DSM 12029 / CIP 104789 / BI429).